A 385-amino-acid chain; its full sequence is Succinyl-diaminopimelate desuccinylase (385 aa).

Zn(2+) is bound at residue histidine 73. The active site involves aspartate 75. Aspartate 106 serves as a coordination point for Zn(2+). Glutamate 141 (proton acceptor) is an active-site residue. Positions 142, 170, and 359 each coordinate Zn(2+).

Belongs to the peptidase M20A family. DapE subfamily. As to quaternary structure, homodimer. Zn(2+) is required as a cofactor. It depends on Co(2+) as a cofactor.

It carries out the reaction N-succinyl-(2S,6S)-2,6-diaminopimelate + H2O = (2S,6S)-2,6-diaminopimelate + succinate. It functions in the pathway amino-acid biosynthesis; L-lysine biosynthesis via DAP pathway; LL-2,6-diaminopimelate from (S)-tetrahydrodipicolinate (succinylase route): step 3/3. In terms of biological role, catalyzes the hydrolysis of N-succinyl-L,L-diaminopimelic acid (SDAP), forming succinate and LL-2,6-diaminopimelate (DAP), an intermediate involved in the bacterial biosynthesis of lysine and meso-diaminopimelic acid, an essential component of bacterial cell walls. The polypeptide is Succinyl-diaminopimelate desuccinylase (Methylorubrum extorquens (strain PA1) (Methylobacterium extorquens)).